The chain runs to 250 residues: Electron transfer flavoprotein subunit beta (250 aa).

The protein belongs to the ETF beta-subunit/FixA family. Heterodimer of an alpha and a beta subunit. It depends on FAD as a cofactor. Requires AMP as cofactor.

Its subcellular location is the mitochondrion matrix. Functionally, the electron transfer flavoprotein serves as a specific electron acceptor for several dehydrogenases, including five acyl-CoA dehydrogenases, glutaryl-CoA and sarcosine dehydrogenase. It transfers the electrons to the main mitochondrial respiratory chain via ETF-ubiquinone oxidoreductase (ETF dehydrogenase). The protein is Electron transfer flavoprotein subunit beta (etfb) of Dictyostelium discoideum (Social amoeba).